A 380-amino-acid chain; its full sequence is Putative zinc finger protein C02F5.12 (380 aa).

The tract at residues 137-187 (NLDIPGTSSDIPSDPSSALKVPKKEVLDESEEILDQTSGSSSFSLNDSEQA) is disordered. Composition is skewed to polar residues over residues 142-152 (GTSSDIPSDPS) and 171-187 (DQTS…SEQA). Residues 271-294 (IPCKLCGFECTNVRRMRSHYAKAH) form a C2H2-type zinc finger.

It is found in the nucleus. The polypeptide is Putative zinc finger protein C02F5.12 (Caenorhabditis elegans).